The primary structure comprises 365 residues: DNA replication and repair protein RecF (365 aa).

30–37 (GQNGSGKT) is a binding site for ATP.

This sequence belongs to the RecF family.

Its subcellular location is the cytoplasm. In terms of biological role, the RecF protein is involved in DNA metabolism; it is required for DNA replication and normal SOS inducibility. RecF binds preferentially to single-stranded, linear DNA. It also seems to bind ATP. The protein is DNA replication and repair protein RecF of Shewanella woodyi (strain ATCC 51908 / MS32).